Here is a 362-residue protein sequence, read N- to C-terminus: Apelin receptor A (362 aa).

Topologically, residues 1 to 34 (MEPTSEYTETYDYYDTGYNDSGCDYSEWEPSYSL) are extracellular. N-linked (GlcNAc...) asparagine glycosylation is present at asparagine 19. 2 disulfide bridges follow: cysteine 23/cysteine 286 and cysteine 105/cysteine 184. A helical membrane pass occupies residues 35–55 (IPVLYMLIFILGLSGNGVVIF). Residues 56-73 (TVWRAKSKRRAADVYIGN) lie on the Cytoplasmic side of the membrane. The helical transmembrane segment at 74–94 (LALADLTFVITLPLWAVYTAL) threads the bilayer. Topologically, residues 95–106 (GYHWPFGVALCK) are extracellular. The helical transmembrane segment at 107-127 (ISSYVVLVNMYASVFCLTCLS) threads the bilayer. Residues 128–149 (FDRYLAIVHSLSSGRLRSRATM) are Cytoplasmic-facing. Residues 150–170 (LASLGAIWFLSCLLAVPTLLF) traverse the membrane as a helical segment. Over 171–211 (RTTVDDTGSNRTTCAMDFSLVTLNQDHESLWIAGLSLSSSA) the chain is Extracellular. Asparagine 180 carries an N-linked (GlcNAc...) asparagine glycan. The helical transmembrane segment at 212 to 232 (LGFLLPFLAMTVCYCFIGCTV) threads the bilayer. At 233–248 (TRHFSHLRKEDQKKRR) the chain is on the cytoplasmic side. The helical transmembrane segment at 249 to 269 (LLKIITTLVVVFAFCWTPFHV) threads the bilayer. Topologically, residues 270–284 (LKSMDALSYLDLAPN) are extracellular. The chain crosses the membrane as a helical span at residues 285–305 (SCGFLHFLLLAHPYATCLAYV). At 306-362 (NSCLNPFLYAFFDLRFRSQCLCLLNLKKAMHGHMSSMSSTLSAQTQKSEVQSLATKV) the chain is on the cytoplasmic side.

It belongs to the G-protein coupled receptor 1 family. First expressed before epiboly in dorsal precursors. During epiboly, expressed in the enveloping layer, yolk syncytial layer and migrating mesendoderm. During segmentation stages, expressed in epithelial structures such as adaxial cells, border cells of the newly formed somites, developing lens, otic vesicles and venous vasculature.

It localises to the cell membrane. Its function is as follows. G protein-coupled receptor for peptide hormones apelin (apln) and apelin receptor early endogenous ligand (apela), that plays a role in the regulation of normal cardiovascular function and fluid homeostasis. When acting as apelin receptor, activates both G(i) protein pathway that inhibits adenylate cyclase activity, and the beta-arrestin pathway that promotes internalization of the receptor. Also functions as mechanoreceptor that is activated by pathological stimuli in a G-protein-independent fashion to induce beta-arrestin signaling, hence eliciting cardiac hypertrophy. However, the presence of apelin ligand blunts cardiac hypertrophic induction from APLNR/APJ on response to pathological stimuli. Plays a key role in early development such as gastrulation, blood vessels formation and heart morphogenesis by acting as a receptor for apela hormone, promoting endoderm and mesendoderm cell migration and regulating the migration of cells fated to become myocardial progenitors, respectively. Positively regulates angioblast migration toward the embryonic midline, i.e. the position of the future vessel formation, during vasculogenesis. May promote sinus venosus (SV)-derived endothelial cells migration into the developing heart to promote coronary blood vessel development. Required for cardiovascular development, particularly for intersomitic vein angiogenesis by acting as a receptor for apln hormone. Also plays a role in various processes in adults such as regulation of blood vessel formation, blood pressure, heart contractility, and heart failure. Acts redundantly with agtrl1b in heart development. The chain is Apelin receptor A (aplnra) from Danio rerio (Zebrafish).